We begin with the raw amino-acid sequence, 505 residues long: Acetyl-coenzyme A carboxylase carboxyl transferase subunit beta, chloroplastic (505 aa).

The segment covering 189 to 205 (ESVSNSKSGSSSIRTGG) has biased composition (low complexity). Residues 189–213 (ESVSNSKSGSSSIRTGGNSSDFNRR) form a disordered region. A CoA carboxyltransferase N-terminal domain is found at 228–499 (LWVQCENCYG…NQNSSRALGS (272 aa)). Cysteine 232, cysteine 235, cysteine 251, and cysteine 254 together coordinate Zn(2+). The C4-type zinc finger occupies 232–254 (CENCYGLNYKKFVSFKMHICEQC).

It belongs to the AccD/PCCB family. Acetyl-CoA carboxylase is a heterohexamer composed of biotin carboxyl carrier protein, biotin carboxylase and 2 subunits each of ACCase subunit alpha and ACCase plastid-coded subunit beta (accD). Requires Zn(2+) as cofactor.

It is found in the plastid. The protein resides in the chloroplast stroma. It carries out the reaction N(6)-carboxybiotinyl-L-lysyl-[protein] + acetyl-CoA = N(6)-biotinyl-L-lysyl-[protein] + malonyl-CoA. Its pathway is lipid metabolism; malonyl-CoA biosynthesis; malonyl-CoA from acetyl-CoA: step 1/1. Component of the acetyl coenzyme A carboxylase (ACC) complex. Biotin carboxylase (BC) catalyzes the carboxylation of biotin on its carrier protein (BCCP) and then the CO(2) group is transferred by the transcarboxylase to acetyl-CoA to form malonyl-CoA. The sequence is that of Acetyl-coenzyme A carboxylase carboxyl transferase subunit beta, chloroplastic from Calycanthus floridus var. glaucus (Eastern sweetshrub).